Reading from the N-terminus, the 628-residue chain is MTKFDHHFDYVKISLASPSKIRSWGERTLPNGQIVGEVTKPETINYRTLKPEMDGLFCERIFGPVKDWECHCGKYKRFRYKGVVCERCGVEVTESKVRRHRMAYIELAAPVTHVWYLKGTTSYIALALDLTVKDLEKIVYFHSYVVINPGNYHKLNYKQLLEGYEWRNLEEKLSSHSSNIFGIEVGIGAEAIYKLLDNINLQNTVEILREESLRPPKLFKNPSTKFNKKMKRLRLLENFLATGANPSWMVLSVIPVIPPDLRPMVQLDGGRFATADLNEFYRRIINRNNRLARLKAILAPEIIIRNEKRMLQEAVDSLMDNGRRGRTVIGANNRPLKSLSDIIEGKQGRFRQNLLGKRVDYSGRSVIVVGPNLKLHQCGLPKEMALELFQPFVIHRLILQGLVNNIKAAKKIIQRNEVVVWTVLQEVIYGHPVLLNRAPTLHRLGIQAFEPILVEGRAIKLHPLVCPAFNADFDGDQMAVHVPLSLEAQAEARLLMLAPHNFLSPATGQPILMPSQDMVLGCYYLTTYNPAAISDSSHYFSNLDDALMAYQQNNITLHSLVWVRFSGLVNDSSNQMVISSKLNIDGTITKIFSDRIVKYDNDGQMVVQYIRTTAGRILFNKAIRESLL.

Zn(2+) contacts are provided by C70, C72, C85, and C88. Residues D472, D474, and D476 each contribute to the Mg(2+) site.

This sequence belongs to the RNA polymerase beta' chain family. RpoC1 subfamily. In plastids the minimal PEP RNA polymerase catalytic core is composed of four subunits: alpha, beta, beta', and beta''. When a (nuclear-encoded) sigma factor is associated with the core the holoenzyme is formed, which can initiate transcription. Requires Mg(2+) as cofactor. Zn(2+) serves as cofactor.

The protein localises to the plastid. Its subcellular location is the chloroplast. It catalyses the reaction RNA(n) + a ribonucleoside 5'-triphosphate = RNA(n+1) + diphosphate. Its function is as follows. DNA-dependent RNA polymerase catalyzes the transcription of DNA into RNA using the four ribonucleoside triphosphates as substrates. The chain is DNA-directed RNA polymerase subunit beta' from Gracilaria tenuistipitata var. liui (Red alga).